The chain runs to 461 residues: PTS system sucrose-specific EIIBC component (461 aa).

A PTS EIIB type-1 domain is found at 4–87 (KETAKRLIEL…SKEADIEREE (84 aa)). Cys26 acts as the Phosphocysteine intermediate; for EIIB activity in catalysis. The PTS EIIC type-1 domain occupies 107–461 (KTLSNIFVPI…KINEDEERKK (355 aa)). 10 helical membrane-spanning segments follow: residues 112 to 132 (IFVP…LLGM), 148 to 168 (LLDM…GVSA), 178 to 198 (LGAV…WGLA), 208 to 228 (FGFD…LLAV), 248 to 268 (LLVT…IAIG), 289 to 309 (AGFV…LTGV), 329 to 349 (LLPI…AVFF), 359 to 379 (IALP…IFGV), 387 to 407 (FIAA…THVA), and 430 to 450 (LIHY…AAFV).

The protein localises to the cell membrane. The enzyme catalyses N(pros)-phospho-L-histidyl-[protein](out) + sucrose = sucrose 6(G)-phosphate(in) + L-histidyl-[protein]. Its function is as follows. The phosphoenolpyruvate-dependent sugar phosphotransferase system (sugar PTS), a major carbohydrate active transport system, catalyzes the phosphorylation of incoming sugar substrates concomitantly with their translocation across the cell membrane. This system is involved in sucrose transport. The polypeptide is PTS system sucrose-specific EIIBC component (sacP) (Bacillus subtilis (strain 168)).